The sequence spans 101 residues: Small ribosomal subunit protein uS14 (101 aa).

The tract at residues 50–70 is disordered; it reads SLPRDSSPSRQRKRCRQTGRP. Residues 59–68 show a composition bias toward basic residues; that stretch reads RQRKRCRQTG.

Belongs to the universal ribosomal protein uS14 family. Part of the 30S ribosomal subunit. Contacts proteins S3 and S10.

Its function is as follows. Binds 16S rRNA, required for the assembly of 30S particles and may also be responsible for determining the conformation of the 16S rRNA at the A site. The polypeptide is Small ribosomal subunit protein uS14 (Erwinia tasmaniensis (strain DSM 17950 / CFBP 7177 / CIP 109463 / NCPPB 4357 / Et1/99)).